A 415-amino-acid polypeptide reads, in one-letter code: Histidine--tRNA ligase (415 aa).

This sequence belongs to the class-II aminoacyl-tRNA synthetase family. As to quaternary structure, homodimer.

The protein localises to the cytoplasm. The enzyme catalyses tRNA(His) + L-histidine + ATP = L-histidyl-tRNA(His) + AMP + diphosphate + H(+). The sequence is that of Histidine--tRNA ligase from Phytoplasma australiense.